Reading from the N-terminus, the 340-residue chain is Porphobilinogen deaminase (340 aa).

C258 is subject to S-(dipyrrolylmethanemethyl)cysteine.

This sequence belongs to the HMBS family. Requires dipyrromethane as cofactor.

It carries out the reaction 4 porphobilinogen + H2O = hydroxymethylbilane + 4 NH4(+). It functions in the pathway porphyrin-containing compound metabolism; protoporphyrin-IX biosynthesis; coproporphyrinogen-III from 5-aminolevulinate: step 2/4. In terms of biological role, tetrapolymerization of the monopyrrole PBG into the hydroxymethylbilane pre-uroporphyrinogen in several discrete steps. The sequence is that of Porphobilinogen deaminase (HEM3) from Candida albicans (strain SC5314 / ATCC MYA-2876) (Yeast).